We begin with the raw amino-acid sequence, 133 residues long: Small ribosomal subunit protein uS8 (133 aa).

This sequence belongs to the universal ribosomal protein uS8 family. As to quaternary structure, part of the 30S ribosomal subunit. Contacts proteins S5 and S12.

In terms of biological role, one of the primary rRNA binding proteins, it binds directly to 16S rRNA central domain where it helps coordinate assembly of the platform of the 30S subunit. The polypeptide is Small ribosomal subunit protein uS8 (Rippkaea orientalis (strain PCC 8801 / RF-1) (Cyanothece sp. (strain PCC 8801))).